Reading from the N-terminus, the 234-residue chain is Ubiquinone biosynthesis O-methyltransferase (234 aa).

Positions 36, 56, 77, and 125 each coordinate S-adenosyl-L-methionine.

It belongs to the methyltransferase superfamily. UbiG/COQ3 family.

It catalyses the reaction a 3-demethylubiquinol + S-adenosyl-L-methionine = a ubiquinol + S-adenosyl-L-homocysteine + H(+). The catalysed reaction is a 3-(all-trans-polyprenyl)benzene-1,2-diol + S-adenosyl-L-methionine = a 2-methoxy-6-(all-trans-polyprenyl)phenol + S-adenosyl-L-homocysteine + H(+). It functions in the pathway cofactor biosynthesis; ubiquinone biosynthesis. Functionally, O-methyltransferase that catalyzes the 2 O-methylation steps in the ubiquinone biosynthetic pathway. This chain is Ubiquinone biosynthesis O-methyltransferase, found in Actinobacillus pleuropneumoniae serotype 7 (strain AP76).